Consider the following 351-residue polypeptide: Photosystem II D2 protein (351 aa).

A helical membrane pass occupies residues Thr39–Thr59. His116 contributes to the chlorophyll a binding site. Residues Gly123–Pro139 form a helical membrane-spanning segment. Gln128 and Asn141 together coordinate pheophytin a. A helical transmembrane segment spans residues Val151–Ala164. Residue His196 participates in chlorophyll a binding. A helical membrane pass occupies residues Gly206–Asp226. The a plastoquinone site is built by His213 and Phe260. His213 is a binding site for Fe cation. His267 is a binding site for Fe cation. Residues Gly277–Arg293 form a helical membrane-spanning segment.

This sequence belongs to the reaction center PufL/M/PsbA/D family. As to quaternary structure, PSII is composed of 1 copy each of membrane proteins PsbA, PsbB, PsbC, PsbD, PsbE, PsbF, PsbH, PsbI, PsbJ, PsbK, PsbL, PsbM, PsbT, PsbX, PsbY, PsbZ, Psb30/Ycf12, at least 3 peripheral proteins of the oxygen-evolving complex and a large number of cofactors. It forms dimeric complexes. The D1/D2 heterodimer binds P680, chlorophylls that are the primary electron donor of PSII, and subsequent electron acceptors. It shares a non-heme iron and each subunit binds pheophytin, quinone, additional chlorophylls, carotenoids and lipids. There is also a Cl(-1) ion associated with D1 and D2, which is required for oxygen evolution. The PSII complex binds additional chlorophylls, carotenoids and specific lipids. serves as cofactor.

It localises to the plastid. The protein localises to the chloroplast thylakoid membrane. It catalyses the reaction 2 a plastoquinone + 4 hnu + 2 H2O = 2 a plastoquinol + O2. In terms of biological role, photosystem II (PSII) is a light-driven water:plastoquinone oxidoreductase that uses light energy to abstract electrons from H(2)O, generating O(2) and a proton gradient subsequently used for ATP formation. It consists of a core antenna complex that captures photons, and an electron transfer chain that converts photonic excitation into a charge separation. The D1/D2 (PsbA/PsbD) reaction center heterodimer binds P680, the primary electron donor of PSII as well as several subsequent electron acceptors. D2 is needed for assembly of a stable PSII complex. This is Photosystem II D2 protein from Thalassiosira pseudonana (Marine diatom).